The chain runs to 583 residues: Proline--tRNA ligase (583 aa).

The protein belongs to the class-II aminoacyl-tRNA synthetase family. ProS type 1 subfamily. Homodimer.

The protein localises to the cytoplasm. The enzyme catalyses tRNA(Pro) + L-proline + ATP = L-prolyl-tRNA(Pro) + AMP + diphosphate. Catalyzes the attachment of proline to tRNA(Pro) in a two-step reaction: proline is first activated by ATP to form Pro-AMP and then transferred to the acceptor end of tRNA(Pro). As ProRS can inadvertently accommodate and process non-cognate amino acids such as alanine and cysteine, to avoid such errors it has two additional distinct editing activities against alanine. One activity is designated as 'pretransfer' editing and involves the tRNA(Pro)-independent hydrolysis of activated Ala-AMP. The other activity is designated 'posttransfer' editing and involves deacylation of mischarged Ala-tRNA(Pro). The misacylated Cys-tRNA(Pro) is not edited by ProRS. This Methylococcus capsulatus (strain ATCC 33009 / NCIMB 11132 / Bath) protein is Proline--tRNA ligase.